The following is an 863-amino-acid chain: Alanine--tRNA ligase (863 aa).

Zn(2+)-binding residues include His561, His565, Cys663, and His667.

This sequence belongs to the class-II aminoacyl-tRNA synthetase family. Requires Zn(2+) as cofactor.

Its subcellular location is the cytoplasm. The catalysed reaction is tRNA(Ala) + L-alanine + ATP = L-alanyl-tRNA(Ala) + AMP + diphosphate. In terms of biological role, catalyzes the attachment of alanine to tRNA(Ala) in a two-step reaction: alanine is first activated by ATP to form Ala-AMP and then transferred to the acceptor end of tRNA(Ala). Also edits incorrectly charged Ser-tRNA(Ala) and Gly-tRNA(Ala) via its editing domain. This chain is Alanine--tRNA ligase, found in Thermotoga maritima (strain ATCC 43589 / DSM 3109 / JCM 10099 / NBRC 100826 / MSB8).